The following is a 251-amino-acid chain: uncharacterized protein (251 aa).

Residues histidine 5, histidine 7, glutamate 101, histidine 132, histidine 163, and aspartate 209 each contribute to the a divalent metal cation site.

It belongs to the metallo-dependent hydrolases superfamily. TatD-type hydrolase family. The cofactor is a divalent metal cation.

This is an uncharacterized protein from Methanocaldococcus jannaschii (strain ATCC 43067 / DSM 2661 / JAL-1 / JCM 10045 / NBRC 100440) (Methanococcus jannaschii).